The sequence spans 127 residues: Protein YwpG (127 aa).

In terms of assembly, interacts with both the D1 and D2 domains of dynamin-like protein DynA.

The protein resides in the cell membrane. This is Protein YwpG (ywpG) from Bacillus subtilis (strain 168).